The sequence spans 418 residues: Gamma-glutamyl phosphate reductase (418 aa).

The protein belongs to the gamma-glutamyl phosphate reductase family.

The protein resides in the cytoplasm. It catalyses the reaction L-glutamate 5-semialdehyde + phosphate + NADP(+) = L-glutamyl 5-phosphate + NADPH + H(+). The protein operates within amino-acid biosynthesis; L-proline biosynthesis; L-glutamate 5-semialdehyde from L-glutamate: step 2/2. Catalyzes the NADPH-dependent reduction of L-glutamate 5-phosphate into L-glutamate 5-semialdehyde and phosphate. The product spontaneously undergoes cyclization to form 1-pyrroline-5-carboxylate. In Colwellia psychrerythraea (strain 34H / ATCC BAA-681) (Vibrio psychroerythus), this protein is Gamma-glutamyl phosphate reductase.